Here is a 377-residue protein sequence, read N- to C-terminus: Probable trehalose-phosphate phosphatase G (377 aa).

The segment at 1 to 20 is disordered; sequence MDLNINKTTPVLSDPTTPVS.

Belongs to the trehalose phosphatase family. The cofactor is a divalent metal cation.

It carries out the reaction alpha,alpha-trehalose 6-phosphate + H2O = alpha,alpha-trehalose + phosphate. The protein operates within glycan biosynthesis; trehalose biosynthesis. Removes the phosphate from trehalose 6-phosphate to produce free trehalose. Trehalose accumulation in plant may improve abiotic stress tolerance. The polypeptide is Probable trehalose-phosphate phosphatase G (TPPG) (Arabidopsis thaliana (Mouse-ear cress)).